The sequence spans 656 residues: Phosphatidylinositol 4,5-bisphosphate-binding protein SLM2 (656 aa).

A PH domain is found at 445–555 (FEVKSGFLEK…WFGNIKALSS (111 aa)). Positions 577–605 (AKSNENTTESVTPQVTNEQHTRYDDVSSS) are disordered. A compositionally biased stretch (polar residues) spans 580–594 (NENTTESVTPQVTNE). A Phosphoserine modification is found at Ser626. The PXIXIT-like, required for interaction with CNA1 and CNA2, and calcineurin-dependent dephosphorylation signature appears at 640–645 (PEFYIE). Phosphoserine is present on residues Ser649 and Ser653.

Heterodimer of SLM1-SLM2. Binds phosphatidylinositol 4,5-bisphosphate, which is required for function. Interacts with the TORC2 subunits AVO2, BIT61 and TOR2. Interacts with the calcineurin catalytic subunits CNA1 and CNA2.

It is found in the cell membrane. Together with SLM1, effector of the TORC2- and calcineurin-signaling pathways. Phosphorylated and activated by TORC2 under favorable growth conditions. Mediates actin polarization via inhibition of calcineurin-dependent transcription. Upon nutrient limitation or environmental stress, gets dephosphorylated by calcineurin, inhibiting interaction with TORC2, thereby antagonizing TORC2 signaling and mediating calcineurin-dependent actin depolarization. Also functions in heat-induced, calcineurin-mediated uracil permease (FUR4) endocytosis. The sequence is that of Phosphatidylinositol 4,5-bisphosphate-binding protein SLM2 (SLM2) from Saccharomyces cerevisiae (strain ATCC 204508 / S288c) (Baker's yeast).